Here is a 726-residue protein sequence, read N- to C-terminus: MNSLQSLCVLCARLNECALDLECLKFCDPVIVLSDMANFKKNGIVILHLYQTFFEGIKEQNLLCASALTVYMQVLLKAMYEQVLLLDAALESFMVDQDRKKYFEKVLCLRRCAEHLSINISLNNGVEFIVQLSTLNDIEQLISKINSVYALLLPQEGLQICGKIIDLLTIMCGACMVAKPESYLETKTCMKCYEELTLTPNQGKSLRRRLHGKFCNHLTEQKAFFNIEKNIETIEKDLGEAILNYGTVQSVATEIKKIFKQQRSAESLHVSDAEKTLKKYNIFSKVPDVIYSLSEFTYWSKISETIVRNVAITLQQLNSCHTLYKQLQNDVSLYLYGEVSEDFLALSENLLTHDERLYVGSIYVSPSRLIDLVTGLSIKNLEESPIFKRLAEEDEVQHKIKSLLHDIRDPQTTETPGRLNTINCMLQTHNLQQEVLARKKAYFQKVSESGYNRVMACIREQESLINKVVSVNVYGNFIFEALSKIMNGFVLRKMYLDGSFRVDSCTYDEHLYIKNNLMPKKLPLELLPDLSEIMYTLLTGPLSDFHKSAYPLPANISMAYGCDHAEMLPHMKEDLARCIEGTIHPSVWMVCEYNEFFNFSGVTDVNDMQKKMWNFIRELTLSVALYNDVFGKRLKIVRIDEEGDLSGNVVLTFNHESPLLFHTGGGMTKFKDVYSLLYCDLQAQLSRETVDVPEGVSYSVRTPNLLDLVRENEQDGSIIPGCLFDE.

A C3H1-type zinc finger spans residues 189–217; sequence CMKCYEELTLTPNQGKSLRRRLHGKFCNH. 626-633 is an ATP binding site; that stretch reads YNDVFGKR.

The protein belongs to the herpesviridae TRM1 protein family. Associates with TRM2 and TRM3 to form the tripartite terminase complex. Interacts with portal protein.

Its subcellular location is the host nucleus. In terms of biological role, component of the molecular motor that translocates viral genomic DNA in empty capsid during DNA packaging. Forms a tripartite terminase complex together with TRM2 and TRM3 in the host cytoplasm. Once the complex reaches the host nucleus, it interacts with the capsid portal vertex. This portal forms a ring in which genomic DNA is translocated into the capsid. TRM1 carries an endonuclease activity that plays an important role for the cleavage of concatemeric viral DNA into unit length genomes. This is Tripartite terminase subunit 1 from Homo sapiens (Human).